A 292-amino-acid chain; its full sequence is Protease HtpX (292 aa).

Helical transmembrane passes span 5–25 (IFLF…VMSV) and 34–54 (SGLL…SLLL). His-140 provides a ligand contact to Zn(2+). Residue Glu-141 is part of the active site. Zn(2+) is bound at residue His-144. Transmembrane regions (helical) follow at residues 155-175 (LLQG…GGII) and 193-213 (IIVF…AMWF). Zn(2+) is bound at residue Glu-218.

Belongs to the peptidase M48B family. The cofactor is Zn(2+).

It is found in the cell inner membrane. This chain is Protease HtpX, found in Xanthomonas oryzae pv. oryzae (strain PXO99A).